The chain runs to 46 residues: Large ribosomal subunit protein bL36 (46 aa).

This sequence belongs to the bacterial ribosomal protein bL36 family.

This is Large ribosomal subunit protein bL36 from Klebsiella pneumoniae (strain 342).